Here is a 289-residue protein sequence, read N- to C-terminus: Mas-related G-protein coupled receptor member G (289 aa).

Over 1-13 (MFGLFGLWRTFDS) the chain is Extracellular. The chain crosses the membrane as a helical span at residues 14–34 (VVFYLTLIVGLGGPVGNGLVL). The Cytoplasmic portion of the chain corresponds to 35-42 (WNLGFRIK). The helical transmembrane segment at 43 to 63 (KGPFSIYLLHLAAADFLFLSC) threads the bilayer. Topologically, residues 64 to 78 (RVGFSVAQAALGAQD) are extracellular. The helical transmembrane segment at 79-99 (TLYFVLTFLWFAVGLWLLAAF) threads the bilayer. Over 100–120 (SVERCLSDLFPACYQGCRPRH) the chain is Cytoplasmic. Residues 121–141 (ASAVLCALVWTPTLPAVPLPA) traverse the membrane as a helical segment. Residues 142–163 (NACGLLRNSACPLVCPRYHVAS) are Extracellular-facing. The helical transmembrane segment at 164 to 184 (VTWFLVLARVAWTAGVVLFVW) threads the bilayer. Topologically, residues 185–195 (VTCCSTRPRPR) are cytoplasmic. A helical membrane pass occupies residues 196–216 (LYGIVLGALLLLFFCGLPSVF). Topologically, residues 217 to 221 (YWSLQ) are extracellular. The helical transmembrane segment at 222 to 242 (PLLNFLLPVFSPLATLLACVN) threads the bilayer. Over 243-289 (SSSKPLIYSGLGRQPGKREPLRSVLRRALGEGAELGARGQSLPMGLL) the chain is Cytoplasmic.

Belongs to the G-protein coupled receptor 1 family. Mas subfamily.

It is found in the cell membrane. Its function is as follows. Orphan receptor. May regulate nociceptor function and/or development, including the sensation or modulation of pain. This Homo sapiens (Human) protein is Mas-related G-protein coupled receptor member G (MRGPRG).